A 61-amino-acid polypeptide reads, in one-letter code: Metallothionein-1L (61 aa).

The interval 1–29 (MDPNCSCATGGSCSCASSCKCKECKCTSC) is beta. 20 residues coordinate a divalent metal cation: Cys5, Cys7, Cys13, Cys15, Cys19, Cys21, Cys24, Cys26, Cys29, Cys33, Cys34, Cys36, Cys37, Cys41, Cys44, Cys48, Cys50, Cys57, Cys59, and Cys60. Positions 30–61 (KKSCCSCCPMGCAKCAQGCVCKGASEKCSCCA) are alpha.

This sequence belongs to the metallothionein superfamily. Type 1 family. In terms of assembly, monomer. In terms of tissue distribution, expressed in reticulocytes.

In terms of biological role, metallothioneins have a high content of cysteine residues that bind various heavy metals; these proteins are transcriptionally regulated by both heavy metals and glucocorticoids. In Homo sapiens (Human), this protein is Metallothionein-1L (MT1L).